We begin with the raw amino-acid sequence, 245 residues long: MLIIPAIDLKDGACVRLRQGRMEDSTVFSDDPVSMAAKWVEGGCRRLHLVDLNGAFEGQPVNGEVVTAIAKRYPTLPIQIGGGIRSLDTIEHYVKAGVSYVIIGTKAVKQPEFVAEACKAFPGKVIVGLDAKDGFVATDGWAEVSSVQVIDLAKRFEADGVSAIVYTDIAKDGMMQGCNVPFTKALAEATRIPVIASGGIHNLGDIKALLDAKAPGIVGAITGRAIYEGTLDVAEAQAFCDNYQG.

Residue Asp8 is the Proton acceptor of the active site. Asp130 serves as the catalytic Proton donor.

This sequence belongs to the HisA/HisF family.

It is found in the cytoplasm. The catalysed reaction is 1-(5-phospho-beta-D-ribosyl)-5-[(5-phospho-beta-D-ribosylamino)methylideneamino]imidazole-4-carboxamide = 5-[(5-phospho-1-deoxy-D-ribulos-1-ylimino)methylamino]-1-(5-phospho-beta-D-ribosyl)imidazole-4-carboxamide. The protein operates within amino-acid biosynthesis; L-histidine biosynthesis; L-histidine from 5-phospho-alpha-D-ribose 1-diphosphate: step 4/9. This is 1-(5-phosphoribosyl)-5-[(5-phosphoribosylamino)methylideneamino] imidazole-4-carboxamide isomerase from Pseudomonas putida (strain GB-1).